The primary structure comprises 142 residues: Neuritin (142 aa).

An N-terminal signal peptide occupies residues M1–A27. Residue A112 is the site of GPI-anchor amidated alanine attachment. The propeptide at G113–F142 is removed in mature form.

Belongs to the neuritin family.

The protein localises to the cell membrane. The protein resides in the synapse. In terms of biological role, modulates postsynaptic dendritic arbor elaboration and synaptic maturation. The sequence is that of Neuritin (nrn1) from Danio rerio (Zebrafish).